Reading from the N-terminus, the 1291-residue chain is DNA-directed RNA polymerase subunit beta' (1291 aa).

Residues Cys60, Cys62, Cys75, and Cys78 each contribute to the Zn(2+) site. Asp535, Asp537, and Asp539 together coordinate Mg(2+). The Zn(2+) site is built by Cys878, Cys954, Cys961, and Cys964.

Belongs to the RNA polymerase beta' chain family. The RNAP catalytic core consists of 2 alpha, 1 beta, 1 beta' and 1 omega subunit. When a sigma factor is associated with the core the holoenzyme is formed, which can initiate transcription. It depends on Mg(2+) as a cofactor. Zn(2+) is required as a cofactor.

The enzyme catalyses RNA(n) + a ribonucleoside 5'-triphosphate = RNA(n+1) + diphosphate. Functionally, DNA-dependent RNA polymerase catalyzes the transcription of DNA into RNA using the four ribonucleoside triphosphates as substrates. This chain is DNA-directed RNA polymerase subunit beta', found in Thermobifida fusca (strain YX).